Reading from the N-terminus, the 998-residue chain is Ephrin type-B receptor 3 (998 aa).

An N-terminal signal peptide occupies residues 1–33 (MARARPPPPPSPPPGLLPLLPPLLLLPLLLLPA). At 34–559 (GCRALEETLM…AQQLQEQLPL (526 aa)) the chain is on the extracellular side. One can recognise an Eph LBD domain in the interval 39–217 (EETLMDTKWV…FYKKCASTTA (179 aa)). A disulfide bridge links cysteine 81 with cysteine 199. Fibronectin type-III domains follow at residues 339–451 (VPSP…TNQA) and 452–545 (APSE…TTSE). Residues asparagine 351 and asparagine 445 are each glycosylated (N-linked (GlcNAc...) asparagine). Residues 560–580 (IVGSATAGLVFVVAVVVIAIV) form a helical membrane-spanning segment. Residues 581–998 (CLRKQRHGSD…QMNQTLPVQV (418 aa)) are Cytoplasmic-facing. Tyrosine 614 is subject to Phosphotyrosine; by autocatalysis. One can recognise a Protein kinase domain in the interval 633 to 896 (VKIEEVIGAG…QIVNTLDKLI (264 aa)). Residues 639 to 647 (IGAGEFGEV) and lysine 665 contribute to the ATP site. Residue aspartate 758 is the Proton acceptor of the active site. The region spanning 925–989 (TTFTTVGDWL…LSSIQDMRLQ (65 aa)) is the SAM domain. The PDZ-binding motif lies at 996-998 (VQV).

This sequence belongs to the protein kinase superfamily. Tyr protein kinase family. Ephrin receptor subfamily. In terms of assembly, heterotetramer upon binding of the ligand. The heterotetramer is composed of an ephrin dimer and a receptor dimer. Oligomerization is probably required to induce biological responses. In terms of processing, phosphorylated. Autophosphorylates upon ligand-binding. Autophosphorylation on Tyr-614 is required for interaction with SH2 domain-containing proteins. Ubiquitinated by RNF186, mainly through 'Lys-48' and 'Lys-63'-linked polyubiquitin chains. In terms of tissue distribution, ubiquitous.

It localises to the cell membrane. The protein resides in the cell projection. Its subcellular location is the dendrite. The enzyme catalyses L-tyrosyl-[protein] + ATP = O-phospho-L-tyrosyl-[protein] + ADP + H(+). Its function is as follows. Receptor tyrosine kinase which binds promiscuously transmembrane ephrin-B family ligands residing on adjacent cells, leading to contact-dependent bidirectional signaling into neighboring cells. The signaling pathway downstream of the receptor is referred to as forward signaling while the signaling pathway downstream of the ephrin ligand is referred to as reverse signaling. Generally has an overlapping and redundant function with EPHB2. Like EPHB2, functions in axon guidance during development regulating for instance the neurons forming the corpus callosum and the anterior commissure, 2 major interhemispheric connections between the temporal lobes of the cerebral cortex. In addition to its role in axon guidance also plays an important redundant role with other ephrin-B receptors in development and maturation of dendritic spines and the formation of excitatory synapses. Controls other aspects of development through regulation of cell migration and positioning. This includes angiogenesis, palate development and thymic epithelium development for instance. Forward and reverse signaling through the EFNB2/EPHB3 complex also regulate migration and adhesion of cells that tubularize the urethra and septate the cloaca. Finally, plays an important role in intestinal epithelium differentiation segregating progenitor from differentiated cells in the crypt. The sequence is that of Ephrin type-B receptor 3 (EPHB3) from Homo sapiens (Human).